Here is a 354-residue protein sequence, read N- to C-terminus: MGCTLSAEERAALERSKAIEKNLKEDGISAAKDVKLLLLGAGESGKSTIVKQMKIIHEDGFSGEDVKQYKPVVYSNTIQSLAAIVRAMDTLGIEYGDKERKADAKMVCDVVSRMEDTEPFSPELLSAMMRLWGDSGIQECFNRSREYQLNDSAKYYLDSLDRIGAADYQPTEQDILRTRVKTTGIVETHFTFKNLHFRLFDVGGQRSERKKWIHCFEDVTAIIFCVALSGYDQVLHEDETTNRMHESLMLFDSICNNKFFIDTSIILFLNKKDLFGEKIKKSPLTICFPEYTGSNTYEDAAAYIQAQFESKNRSPNKEIYCHMTCATDTNNIQVVFDAVTDIIIANNLRGCGLY.

Glycine 2 carries N-myristoyl glycine lipidation. Residue cysteine 3 is the site of S-palmitoyl cysteine attachment. Residues 32 to 354 form the G-alpha domain; that stretch reads KDVKLLLLGA…ANNLRGCGLY (323 aa). The interval 35 to 48 is G1 motif; it reads KLLLLGAGESGKST. Residues glutamate 43, lysine 46, serine 47, threonine 48, serine 152, leucine 176, arginine 177, threonine 178, and arginine 179 each contribute to the GTP site. Serine 47 contacts Mg(2+). The tract at residues 174-182 is G2 motif; the sequence is DILRTRVKT. Threonine 182 is a Mg(2+) binding site. The G3 motif stretch occupies residues 197 to 206; it reads FRLFDVGGQR. Glutamine 205 bears the 5-glutamyl histamine mark. The G4 motif stretch occupies residues 266-273; that stretch reads ILFLNKKD. GTP-binding residues include asparagine 270, aspartate 273, and cysteine 325. The G5 motif stretch occupies residues 324–329; that stretch reads TCATDT. Cysteine 351 carries the S-palmitoyl cysteine lipid modification.

It belongs to the G-alpha family. G(i/o/t/z) subfamily. G proteins are composed of 3 units; alpha, beta and gamma. The alpha chain contains the guanine nucleotide binding site. Forms a complex with GNB1 and GNG3. Interacts with RGS14. Interacts with RGS16. Interacts with RGS19. Interacts (when palmitoylated) with ADGRG3. Histaminylated at Gln-205 residues by TGM2.

It is found in the cell membrane. The protein resides in the membrane. The catalysed reaction is GTP + H2O = GDP + phosphate + H(+). With respect to regulation, the GTPase activity is promoted by GTPAse activators, such as RGS14, RGS16 and RGS19. Its function is as follows. Guanine nucleotide-binding proteins (G proteins) function as transducers downstream of G protein-coupled receptors (GPCRs) in numerous signaling cascades. The alpha chain contains the guanine nucleotide binding site and alternates between an active, GTP-bound state and an inactive, GDP-bound state. Signaling by an activated GPCR promotes GDP release and GTP binding. The alpha subunit has a low GTPase activity that converts bound GTP to GDP, thereby terminating the signal. Both GDP release and GTP hydrolysis are modulated by numerous regulatory proteins. Signaling is mediated via effector proteins, such as adenylate cyclase. Inhibits adenylate cyclase activity, leading to decreased intracellular cAMP levels. This is Guanine nucleotide-binding protein G(o) subunit alpha (GNAO1) from Bos taurus (Bovine).